The sequence spans 317 residues: Aspartate carbamoyltransferase catalytic subunit (317 aa).

Carbamoyl phosphate contacts are provided by arginine 66 and threonine 67. Lysine 94 is an L-aspartate binding site. The carbamoyl phosphate site is built by arginine 116, histidine 144, and glutamine 147. The L-aspartate site is built by arginine 177 and arginine 231. Carbamoyl phosphate is bound by residues glycine 272 and proline 273.

It belongs to the aspartate/ornithine carbamoyltransferase superfamily. ATCase family. As to quaternary structure, heterododecamer (2C3:3R2) of six catalytic PyrB chains organized as two trimers (C3), and six regulatory PyrI chains organized as three dimers (R2).

The catalysed reaction is carbamoyl phosphate + L-aspartate = N-carbamoyl-L-aspartate + phosphate + H(+). It participates in pyrimidine metabolism; UMP biosynthesis via de novo pathway; (S)-dihydroorotate from bicarbonate: step 2/3. Functionally, catalyzes the condensation of carbamoyl phosphate and aspartate to form carbamoyl aspartate and inorganic phosphate, the committed step in the de novo pyrimidine nucleotide biosynthesis pathway. The chain is Aspartate carbamoyltransferase catalytic subunit from Nitrobacter winogradskyi (strain ATCC 25391 / DSM 10237 / CIP 104748 / NCIMB 11846 / Nb-255).